Reading from the N-terminus, the 807-residue chain is uncharacterized protein (807 aa).

Positions 281-566 (IIQSLKSEEF…DKILFLGTNI (286 aa)) constitute a Reverse transcriptase domain.

Its subcellular location is the mitochondrion. This is an uncharacterized protein from Schizosaccharomyces pombe (strain 972 / ATCC 24843) (Fission yeast).